The following is a 163-amino-acid chain: Glycine cleavage system H-like protein gcvH5, mitochondrial (163 aa).

Residues 1 to 23 constitute a mitochondrion transit peptide; that stretch reads MFLFKTTNNLRKSLSNKFFCTRY. The 87-residue stretch at 50–136 folds into the Lipoyl-binding domain; sequence IGTLGLTENG…MSKGWLCKIK (87 aa).

It belongs to the GcvH family.

The protein localises to the mitochondrion. In Dictyostelium discoideum (Social amoeba), this protein is Glycine cleavage system H-like protein gcvH5, mitochondrial (gcvH5).